We begin with the raw amino-acid sequence, 240 residues long: Uridylate kinase (240 aa).

12–15 is an ATP binding site; the sequence is KLSG. The tract at residues 20-25 is involved in allosteric activation by GTP; the sequence is GEQGFG. Gly54 contacts UMP. ATP contacts are provided by Gly55 and Arg59. UMP contacts are provided by residues Asp74 and 135-142; that span reads TGNPYFST. 3 residues coordinate ATP: Asn163, Tyr169, and Asp172.

Belongs to the UMP kinase family. Homohexamer.

It localises to the cytoplasm. The enzyme catalyses UMP + ATP = UDP + ADP. It functions in the pathway pyrimidine metabolism; CTP biosynthesis via de novo pathway; UDP from UMP (UMPK route): step 1/1. With respect to regulation, allosterically activated by GTP. Inhibited by UTP. Its function is as follows. Catalyzes the reversible phosphorylation of UMP to UDP. This chain is Uridylate kinase, found in Bacillus anthracis.